The chain runs to 224 residues: UPF0758 protein PSPA7_6095 (224 aa).

The MPN domain maps to 102–224; that stretch reads VLESPQAVRD…PLSLAEYGWM (123 aa). 3 residues coordinate Zn(2+): His-173, His-175, and Asp-186. Residues 173–186 carry the JAMM motif motif; the sequence is HNHPSGDARPSLAD.

Belongs to the UPF0758 family.

This Pseudomonas paraeruginosa (strain DSM 24068 / PA7) (Pseudomonas aeruginosa (strain PA7)) protein is UPF0758 protein PSPA7_6095.